The primary structure comprises 295 residues: Hepatic leukemia factor (295 aa).

Residues 36-52 show a composition bias toward basic and acidic residues; that stretch reads PEDAFSKEKDKGKKLDD. Disordered stretches follow at residues 36 to 76 and 92 to 149; these read PEDA…TLPY and LSEN…SPIR. Positions 225-288 constitute a bZIP domain; the sequence is DDKYWARRRK…GKCKNILAKY (64 aa). The basic motif stretch occupies residues 227–247; the sequence is KYWARRRKNNMAAKRSRDARR. Residues 248–255 form a leucine-zipper region; it reads LKENQIAI.

Belongs to the bZIP family. PAR subfamily. In terms of assembly, binds DNA specifically as homodimer or heterodimer with other PAR factors.

It is found in the nucleus. The polypeptide is Hepatic leukemia factor (Hlf) (Mus musculus (Mouse)).